Consider the following 372-residue polypeptide: sn-glycerol-3-phosphate import ATP-binding protein UgpC (372 aa).

The ABC transporter domain occupies 2–233 (LDIKQLVKTY…PASTFVASFI (232 aa)). 35-42 (GPSGCGKS) lines the ATP pocket.

The protein belongs to the ABC transporter superfamily. sn-glycerol-3-phosphate importer (TC 3.A.1.1.3) family. The complex is composed of two ATP-binding proteins (UgpC), two transmembrane proteins (UgpA and UgpE) and a solute-binding protein (UgpB).

Its subcellular location is the cell inner membrane. It catalyses the reaction sn-glycerol 3-phosphate(out) + ATP + H2O = sn-glycerol 3-phosphate(in) + ADP + phosphate + H(+). Part of the ABC transporter complex UgpBAEC involved in sn-glycerol-3-phosphate (G3P) import. Responsible for energy coupling to the transport system. This is sn-glycerol-3-phosphate import ATP-binding protein UgpC from Vibrio cholerae serotype O1 (strain ATCC 39315 / El Tor Inaba N16961).